The chain runs to 240 residues: Eukaryotic translation initiation factor 3 subunit K (240 aa).

Positions 41–221 (YDKDIVLTIL…TIKTRNIDEK (181 aa)) constitute a PCI domain.

It belongs to the eIF-3 subunit K family. Component of the eukaryotic translation initiation factor 3 (eIF-3) complex.

It is found in the cytoplasm. In terms of biological role, component of the eukaryotic translation initiation factor 3 (eIF-3) complex, which is involved in protein synthesis of a specialized repertoire of mRNAs and, together with other initiation factors, stimulates binding of mRNA and methionyl-tRNAi to the 40S ribosome. The eIF-3 complex specifically targets and initiates translation of a subset of mRNAs involved in cell proliferation. The polypeptide is Eukaryotic translation initiation factor 3 subunit K (Caenorhabditis elegans).